Reading from the N-terminus, the 89-residue chain is Small ribosomal subunit protein uS15 (89 aa).

The protein belongs to the universal ribosomal protein uS15 family. As to quaternary structure, part of the 30S ribosomal subunit. Forms a bridge to the 50S subunit in the 70S ribosome, contacting the 23S rRNA.

One of the primary rRNA binding proteins, it binds directly to 16S rRNA where it helps nucleate assembly of the platform of the 30S subunit by binding and bridging several RNA helices of the 16S rRNA. Its function is as follows. Forms an intersubunit bridge (bridge B4) with the 23S rRNA of the 50S subunit in the ribosome. The chain is Small ribosomal subunit protein uS15 from Chlorobaculum tepidum (strain ATCC 49652 / DSM 12025 / NBRC 103806 / TLS) (Chlorobium tepidum).